Reading from the N-terminus, the 176-residue chain is Nucleoside triphosphate/diphosphate phosphatase (176 aa).

Arginine 23 serves as the catalytic Proton donor. Residues asparagine 87, aspartate 103, aspartate 105, aspartate 107, aspartate 120, and glutamate 123 each contribute to the Mg(2+) site.

Belongs to the Ntdp family. Requires Mg(2+) as cofactor.

It carries out the reaction a ribonucleoside 5'-triphosphate + H2O = a ribonucleoside 5'-diphosphate + phosphate + H(+). The enzyme catalyses a ribonucleoside 5'-diphosphate + H2O = a ribonucleoside 5'-phosphate + phosphate + H(+). In terms of biological role, has nucleoside phosphatase activity towards nucleoside triphosphates and nucleoside diphosphates. The protein is Nucleoside triphosphate/diphosphate phosphatase of Bacillus cereus (strain B4264).